Here is a 607-residue protein sequence, read N- to C-terminus: UvrABC system protein C (607 aa).

One can recognise a GIY-YIG domain in the interval 11–89; sequence CKPGVYRFED…IKEFAPPCNV (79 aa). Residues 201–236 form the UVR domain; that stretch reads SSLLESLKKKMLKASKNKEYEEAAILRDKIQAAQTV.

The protein belongs to the UvrC family. Interacts with UvrB in an incision complex.

The protein localises to the cytoplasm. Its function is as follows. The UvrABC repair system catalyzes the recognition and processing of DNA lesions. UvrC both incises the 5' and 3' sides of the lesion. The N-terminal half is responsible for the 3' incision and the C-terminal half is responsible for the 5' incision. The polypeptide is UvrABC system protein C (Tropheryma whipplei (strain Twist) (Whipple's bacillus)).